Reading from the N-terminus, the 693-residue chain is CREB-regulated transcription coactivator 2 (693 aa).

Residues 1–20 (MATSGANGPGSATASASNPR) are compositionally biased toward polar residues. Positions 1 to 30 (MATSGANGPGSATASASNPRKFSEKIALQK) are disordered. N-acetylalanine is present on A2. R51 carries the asymmetric dimethylarginine; by PRMT6 modification. Phosphoserine is present on residues S70, S86, and S90. 3 positions are modified to asymmetric dimethylarginine; by PRMT6: R99, R120, and R123. Phosphoserine is present on S136. R161 and R168 each carry asymmetric dimethylarginine; by PRMT6. T169 is subject to Phosphothreonine. S171 bears the Phosphoserine; by AMPK, MARK2, SIK1 and SIK2 mark. T192 bears the Phosphothreonine mark. A Glycyl lysine isopeptide (Lys-Gly) (interchain with G-Cter in SUMO2) cross-link involves residue K234. The short motif at 271–287 (TGGSLPDLTNLHFPPPL) is the Nuclear export signal element. S274 is subject to Phosphoserine; by MARK2. Disordered regions lie at residues 282–306 (HFPP…GGNS) and 328–554 (GYDA…MSDF). 5 positions are modified to phosphoserine: S306, S368, S393, S433, and S456. Low complexity-rich tracts occupy residues 331-378 (APGL…SSLA) and 386-415 (SLGH…GAPS). Over residues 447–468 (SQQQLPKQFSPTMSPTLSSITQ) the composition is skewed to polar residues. Y488 bears the Phosphotyrosine mark. Phosphoserine is present on residues S489, S490, and S492. Over residues 498–507 (QPHTPKSLQQ) the composition is skewed to polar residues. Residue T501 is modified to Phosphothreonine. Positions 509–529 (GLPSQSCSVQSSGGQPPGRQS) are enriched in low complexity. 3 positions are modified to phosphoserine: S613, S623, and S624.

Belongs to the TORC family. In terms of assembly, binds, as a tetramer, through its N-terminal region, with the bZIP domain of CREB1. 'Arg-314' in the bZIP domain of CREB1 is essential for this interaction. Interaction, via its C-terminal, with TAF4, enhances recruitment of TAF4 to CREB1. Interacts with SIK2. Interacts with 14-3-3 proteins, YWHAB and YWHAG. Interacts (probably when phosphorylated at Ser-171) with YWHAE. Interacts with calmodulin-dependent catalytic subunit PPP3CA/calcineurin A. Interaction with COP1 mediates nuclear export and degradation of CRTC2. As to quaternary structure, (Microbial infection) Interaction with the human T-cell leukemia virus type 1 (HTLV-1) Tax protein is essential for optimal transcription activation by Tax. Phosphorylation/dephosphorylation states of Ser-171 are required for regulating transduction of CREB activity. CRTCs/TORCs are inactive when phosphorylated, and active when dephosphorylated at this site. This primary site of phosphorylation, is regulated by cAMP and calcium levels and is dependent on the phosphorylation of SIKs (SIK1 and SIK2) by LKB1. Following adenylyl cyclase activation, dephosphorylated at Ser-171 by PPP3CA/calcineurin A resulting in CRTC2 dissociation from 14-3-3 proteins and PPP3CA. Both insulin and AMPK increase this phosphorylation of CRTC2 while glucagon suppresses it. Phosphorylation at Ser-274 by MARK2 is induced under low glucose conditions and dephosphorylated in response to glucose influx. Phosphorylation at Ser-274 promotes interaction with 14-3-3 proteins and translocation to the cytoplasm. In terms of processing, asymmetric dimethylation of arginine resisues by PRMT6 enhances the association of CRTC2 with CREB on the promoters of gluconeogenic genes. In terms of tissue distribution, most abundantly expressed in the thymus. Present in both B and T-lymphocytes. Highly expressed in HEK293T cells and in insulinomas. High levels also in spleen, ovary, muscle and lung, with highest levels in muscle. Lower levels found in brain, colon, heart, kidney, prostate, small intestine and stomach. Weak expression in liver and pancreas.

The protein resides in the cytoplasm. The protein localises to the nucleus. Its function is as follows. Transcriptional coactivator for CREB1 which activates transcription through both consensus and variant cAMP response element (CRE) sites. Acts as a coactivator, in the SIK/TORC signaling pathway, being active when dephosphorylated and acts independently of CREB1 'Ser-133' phosphorylation. Enhances the interaction of CREB1 with TAF4. Regulates gluconeogenesis as a component of the LKB1/AMPK/TORC2 signaling pathway. Regulates the expression of specific genes such as the steroidogenic gene, StAR. Potent coactivator of PPARGC1A and inducer of mitochondrial biogenesis in muscle cells. Also coactivator for TAX activation of the human T-cell leukemia virus type 1 (HTLV-1) long terminal repeats (LTR). In Homo sapiens (Human), this protein is CREB-regulated transcription coactivator 2 (CRTC2).